Here is a 620-residue protein sequence, read N- to C-terminus: 1-deoxy-D-xylulose-5-phosphate synthase (620 aa).

Thiamine diphosphate-binding positions include His-75 and 116-118; that span reads AHS. Asp-147 serves as a coordination point for Mg(2+). Thiamine diphosphate is bound by residues 148 to 149, Asn-177, Tyr-284, and Glu-366; that span reads GA. Asn-177 is a binding site for Mg(2+).

The protein belongs to the transketolase family. DXPS subfamily. As to quaternary structure, homodimer. Requires Mg(2+) as cofactor. Thiamine diphosphate is required as a cofactor.

It carries out the reaction D-glyceraldehyde 3-phosphate + pyruvate + H(+) = 1-deoxy-D-xylulose 5-phosphate + CO2. Its pathway is metabolic intermediate biosynthesis; 1-deoxy-D-xylulose 5-phosphate biosynthesis; 1-deoxy-D-xylulose 5-phosphate from D-glyceraldehyde 3-phosphate and pyruvate: step 1/1. Its function is as follows. Catalyzes the acyloin condensation reaction between C atoms 2 and 3 of pyruvate and glyceraldehyde 3-phosphate to yield 1-deoxy-D-xylulose-5-phosphate (DXP). This Bordetella bronchiseptica (strain ATCC BAA-588 / NCTC 13252 / RB50) (Alcaligenes bronchisepticus) protein is 1-deoxy-D-xylulose-5-phosphate synthase.